The sequence spans 315 residues: Methionyl-tRNA formyltransferase (315 aa).

Residue 113 to 116 (SLLP) coordinates (6S)-5,6,7,8-tetrahydrofolate.

Belongs to the Fmt family.

The catalysed reaction is L-methionyl-tRNA(fMet) + (6R)-10-formyltetrahydrofolate = N-formyl-L-methionyl-tRNA(fMet) + (6S)-5,6,7,8-tetrahydrofolate + H(+). Its function is as follows. Attaches a formyl group to the free amino group of methionyl-tRNA(fMet). The formyl group appears to play a dual role in the initiator identity of N-formylmethionyl-tRNA by promoting its recognition by IF2 and preventing the misappropriation of this tRNA by the elongation apparatus. The protein is Methionyl-tRNA formyltransferase of Shigella boydii serotype 18 (strain CDC 3083-94 / BS512).